We begin with the raw amino-acid sequence, 436 residues long: Trigger factor (436 aa).

The PPIase FKBP-type domain maps to 161 to 246; sequence DDQLNIDFVG…VNSVSEPKLP (86 aa).

This sequence belongs to the FKBP-type PPIase family. Tig subfamily.

It localises to the cytoplasm. It catalyses the reaction [protein]-peptidylproline (omega=180) = [protein]-peptidylproline (omega=0). Its function is as follows. Involved in protein export. Acts as a chaperone by maintaining the newly synthesized protein in an open conformation. Functions as a peptidyl-prolyl cis-trans isomerase. The polypeptide is Trigger factor (Pseudomonas fluorescens (strain ATCC BAA-477 / NRRL B-23932 / Pf-5)).